We begin with the raw amino-acid sequence, 513 residues long: Na(+)/H(+) antiporter NhaB (513 aa).

A run of 12 helical transmembrane segments spans residues 23-43 (LALI…PFVA), 52-72 (IFTL…LLAI), 97-117 (LLLM…LFIF), 120-140 (LLLS…AAAF), 144-164 (FLDA…FYGI), 202-222 (LMMH…VGEP), 238-258 (FFLR…LTCL), 303-323 (AIIG…VGLI), 348-368 (TESL…AVII), 391-411 (LFYI…VGTI), 447-467 (ATPN…APLI), and 475-495 (VWMA…CVEF).

The protein belongs to the NhaB Na(+)/H(+) (TC 2.A.34) antiporter family.

It localises to the cell inner membrane. The enzyme catalyses 2 Na(+)(in) + 3 H(+)(out) = 2 Na(+)(out) + 3 H(+)(in). Na(+)/H(+) antiporter that extrudes sodium in exchange for external protons. The polypeptide is Na(+)/H(+) antiporter NhaB (Escherichia coli O6:H1 (strain CFT073 / ATCC 700928 / UPEC)).